The sequence spans 374 residues: Beta sliding clamp (374 aa).

The protein belongs to the beta sliding clamp family. In terms of assembly, forms a ring-shaped head-to-tail homodimer around DNA which binds and tethers DNA polymerases and other proteins to the DNA. The DNA replisome complex has a single clamp-loading complex (3 tau and 1 each of delta, delta', psi and chi subunits) which binds 3 Pol III cores (1 core on the leading strand and 2 on the lagging strand) each with a beta sliding clamp dimer. Additional proteins in the replisome are other copies of gamma, psi and chi, Ssb, DNA helicase and RNA primase.

The protein localises to the cytoplasm. In terms of biological role, confers DNA tethering and processivity to DNA polymerases and other proteins. Acts as a clamp, forming a ring around DNA (a reaction catalyzed by the clamp-loading complex) which diffuses in an ATP-independent manner freely and bidirectionally along dsDNA. Initially characterized for its ability to contact the catalytic subunit of DNA polymerase III (Pol III), a complex, multichain enzyme responsible for most of the replicative synthesis in bacteria; Pol III exhibits 3'-5' exonuclease proofreading activity. The beta chain is required for initiation of replication as well as for processivity of DNA replication. The chain is Beta sliding clamp (dnaN) from Helicobacter pylori (strain ATCC 700392 / 26695) (Campylobacter pylori).